Here is a 211-residue protein sequence, read N- to C-terminus: Imidazole glycerol phosphate synthase subunit HisH (211 aa).

In terms of domain architecture, Glutamine amidotransferase type-1 spans 1–211; that stretch reads MIGIIDYGMG…ASIIEGKGSM (211 aa). Cysteine 79 functions as the Nucleophile in the catalytic mechanism. Catalysis depends on residues histidine 186 and glutamate 188.

As to quaternary structure, heterodimer of HisH and HisF.

Its subcellular location is the cytoplasm. The enzyme catalyses 5-[(5-phospho-1-deoxy-D-ribulos-1-ylimino)methylamino]-1-(5-phospho-beta-D-ribosyl)imidazole-4-carboxamide + L-glutamine = D-erythro-1-(imidazol-4-yl)glycerol 3-phosphate + 5-amino-1-(5-phospho-beta-D-ribosyl)imidazole-4-carboxamide + L-glutamate + H(+). It catalyses the reaction L-glutamine + H2O = L-glutamate + NH4(+). The protein operates within amino-acid biosynthesis; L-histidine biosynthesis; L-histidine from 5-phospho-alpha-D-ribose 1-diphosphate: step 5/9. Functionally, IGPS catalyzes the conversion of PRFAR and glutamine to IGP, AICAR and glutamate. The HisH subunit catalyzes the hydrolysis of glutamine to glutamate and ammonia as part of the synthesis of IGP and AICAR. The resulting ammonia molecule is channeled to the active site of HisF. This is Imidazole glycerol phosphate synthase subunit HisH from Geobacillus sp. (strain WCH70).